A 97-amino-acid chain; its full sequence is UPF0729 protein GD16342 (97 aa).

The segment at 64 to 97 (KPEKASVGPAEESQNPPLNAIAAETEVDESKKEI) is disordered. The residue at position 69 (Ser69) is a Phosphoserine.

Belongs to the UPF0729 family.

The protein is UPF0729 protein GD16342 of Drosophila simulans (Fruit fly).